A 482-amino-acid chain; its full sequence is Arginine/ornithine antiporter (482 aa).

The Cytoplasmic segment spans residues 1 to 10; the sequence is MSQESSQKLR. Residues 11–31 form a helical membrane-spanning segment; it reads LGALTALVVGSMIGGGIFSLP. Residues 32–40 lie on the Periplasmic side of the membrane; sequence QNMAASADV. A helical membrane pass occupies residues 41–61; sequence GAVLIGWAITAVGMLTLAFVF. Topologically, residues 62 to 100 are cytoplasmic; sequence QTLANRKPELDGGVYAYAKAGFGDYMGFSSAWGYWISAW. Residues 101–121 form a helical membrane-spanning segment; that stretch reads LGNVGYFVLLFSTLGYFFPIF. Topologically, residues 122–124 are periplasmic; sequence GKG. Residues 125 to 145 traverse the membrane as a helical segment; the sequence is DTVAAIVCASVLLWALHFLVL. Residues 146-156 lie on the Cytoplasmic side of the membrane; sequence RGIKEAAFINT. Residues 157 to 177 traverse the membrane as a helical segment; it reads VTTVAKVVPLFLFILICLFAF. At 178–202 the chain is on the periplasmic side; sequence KLDIFTADIWGKSNPDLGSVMNQVR. A helical transmembrane segment spans residues 203 to 223; sequence NMMLVTVWVFIGIEGASIFSS. Over 224-235 the chain is Cytoplasmic; sequence RAEKRSDVGKAT. A helical membrane pass occupies residues 236–256; that stretch reads VIGFITVLLLLVLVNVLSMGV. Topologically, residues 257–283 are periplasmic; sequence MTQPELAKLQNPSMALVLEHVVGHWGA. A helical membrane pass occupies residues 284–304; it reads VLISVGLLISLLGALLSWVLL. Topologically, residues 305 to 333 are cytoplasmic; sequence CAEIMFAAAKDHTMPEFLRRENANQVPAN. The helical transmembrane segment at 334–354 threads the bilayer; it reads ALWLTNICVQVFLVVVFFTSG. The Periplasmic segment spans residues 355–365; sequence DPDGMDPYTKM. The chain crosses the membrane as a helical span at residues 366–386; sequence LLLATSMILIPYFWSAAYGLL. Over 387–403 the chain is Cytoplasmic; that stretch reads LTLKGETYENDARERSK. The chain crosses the membrane as a helical span at residues 404 to 424; that stretch reads DLVIAGIAVAYAVWLLYAGGL. Position 425 (Lys-425) is a topological domain, periplasmic. The chain crosses the membrane as a helical span at residues 426–446; it reads YLLLSALLYAPGAILFAKAKH. Residues 447–458 are Cytoplasmic-facing; sequence EVGQPIFTGIEK. Residues 459–479 form a helical membrane-spanning segment; the sequence is LIFAAVVIGALVAAYGLYDGF. Residues 480–482 lie on the Periplasmic side of the membrane; that stretch reads LTL.

This sequence belongs to the amino acid-polyamine-organocation (APC) superfamily. Basic amino acid/polyamine antiporter (APA) (TC 2.A.3.2) family.

It is found in the cell inner membrane. It carries out the reaction L-ornithine(in) + L-arginine(out) = L-ornithine(out) + L-arginine(in). Catalyzes electroneutral exchange between arginine and ornithine to allow high-efficiency energy conversion in the arginine deiminase pathway. Also mediates the proton motive force-driven uptake of arginine and ornithine, but the exchange is several orders of magnitude faster than the proton motive force-driven transport. The sequence is that of Arginine/ornithine antiporter from Pseudomonas aeruginosa (strain ATCC 15692 / DSM 22644 / CIP 104116 / JCM 14847 / LMG 12228 / 1C / PRS 101 / PAO1).